The chain runs to 279 residues: Pantothenate synthetase (279 aa).

Residue 26 to 33 (MGNLHEGH) coordinates ATP. His33 serves as the catalytic Proton donor. Residue Gln57 participates in (R)-pantoate binding. Gln57 is a binding site for beta-alanine. Position 144–147 (144–147 (GKKD)) interacts with ATP. Gln150 serves as a coordination point for (R)-pantoate. ATP-binding positions include Val173 and 181–184 (LSSR).

It belongs to the pantothenate synthetase family. As to quaternary structure, homodimer.

It localises to the cytoplasm. It carries out the reaction (R)-pantoate + beta-alanine + ATP = (R)-pantothenate + AMP + diphosphate + H(+). Its pathway is cofactor biosynthesis; (R)-pantothenate biosynthesis; (R)-pantothenate from (R)-pantoate and beta-alanine: step 1/1. In terms of biological role, catalyzes the condensation of pantoate with beta-alanine in an ATP-dependent reaction via a pantoyl-adenylate intermediate. The protein is Pantothenate synthetase of Burkholderia orbicola (strain MC0-3).